We begin with the raw amino-acid sequence, 436 residues long: Trigger factor (436 aa).

In terms of domain architecture, PPIase FKBP-type spans 163-248 (GDRVVLDFAG…VKEVAEGVLP (86 aa)).

It belongs to the FKBP-type PPIase family. Tig subfamily.

It localises to the cytoplasm. It catalyses the reaction [protein]-peptidylproline (omega=180) = [protein]-peptidylproline (omega=0). Its function is as follows. Involved in protein export. Acts as a chaperone by maintaining the newly synthesized protein in an open conformation. Functions as a peptidyl-prolyl cis-trans isomerase. In Bordetella pertussis (strain Tohama I / ATCC BAA-589 / NCTC 13251), this protein is Trigger factor.